A 928-amino-acid chain; its full sequence is G-protein coupled receptor family C group 6 member A (928 aa).

The first 20 residues, 1–20 (MALLITVVTCFMIILDTSQS), serve as a signal peptide directing secretion. Topologically, residues 21-594 (CHTPDDFVAI…EYLDWDDSLA (574 aa)) are extracellular. N-linked (GlcNAc...) asparagine glycans are attached at residues N332, N555, and N567. Residues 595–615 (LLLIALSLLGIAFVLAIGIIF) form a helical membrane-spanning segment. At 616–630 (TRNLKTPVVKSSGGL) the chain is on the cytoplasmic side. Residues 631 to 651 (VVCYVMLICHALNFASTGFFI) traverse the membrane as a helical segment. Over 652–669 (GEPQDFACKTRQTLFGVS) the chain is Extracellular. Residues 670–690 (FTLCVSCILTKSLKILLAFSF) traverse the membrane as a helical segment. Residues 691 to 706 (DPKLTMFLKCLYRPVP) are Cytoplasmic-facing. Residues 707 to 727 (IVLTCTGIQVVICTLWLVLAA) form a helical membrane-spanning segment. Over 728–750 (PSVEENISLPRVIILECEEGSAL) the chain is Extracellular. A helical transmembrane segment spans residues 751–771 (AFGTMLGYITVLAFICFVFAF). The Cytoplasmic segment spans residues 772-784 (KGRKLPENYNEAK). A helical transmembrane segment spans residues 785 to 805 (FLTFGMLIYFIAWITFIPVYT). Residues 806-812 (TTFGKYL) are Extracellular-facing. A helical transmembrane segment spans residues 813 to 833 (PAVEIIVILISNYGILCCIFF). Topologically, residues 834 to 928 (PKCYIILCKQ…TLRQKRSSSI (95 aa)) are cytoplasmic.

It belongs to the G-protein coupled receptor 3 family. In terms of assembly, homodimer; disulfide-linked. In terms of processing, N-glycosylated. In terms of tissue distribution, expressed at high level in liver, lung, spleen and heart. Expressed at lower level in kidney, skeletal muscle and brain. Expressed in 7 dpc, 11 dpc, 15 dpc and 17 dpc embryos.

It localises to the cell membrane. Its function is as follows. Receptor activated by multiple ligands, including osteocalcin (BGLAP), basic amino acids, and various cations. Activated by amino acids with a preference for basic amino acids such as L-Lys, L-Arg and L-ornithine but also by small and polar amino acids. The L-alpha amino acids respond is augmented by divalent cations Ca(2+) and Mg(2+). Seems to act through a G(q)/G(11) and G(i)-coupled pathway. Regulates testosterone production by acting as a ligand for uncarboxylated osteocalcin hormone: osteocalcin-binding at the surface of Leydig cells initiates a signaling response that promotes the expression of enzymes required for testosterone synthesis in a CREB-dependent manner. Mediates the non-genomic effects of androgens in multiple tissue. May coordinate nutritional and hormonal anabolic signals through the sensing of extracellular amino acids, osteocalcin, divalent ions and its responsiveness to anabolic steroids. The sequence is that of G-protein coupled receptor family C group 6 member A (Gprc6a) from Mus musculus (Mouse).